The following is a 357-amino-acid chain: Prostaglandin D2 receptor (357 aa).

The Extracellular portion of the chain corresponds to 1 to 20 (MNESYRCQTSTWVERGSSAT). Asparagine 2 is a glycosylation site (N-linked (GlcNAc...) asparagine). A helical transmembrane segment spans residues 21-41 (MGAVLFGAGLLGNLLALVLLA). Residues 42 to 58 (RSGLGSCRPGPLHPPPS) are Cytoplasmic-facing. The helical transmembrane segment at 59–79 (VFYVLVCGLTVTDLLGKCLIS) threads the bilayer. Residues 80–106 (PMVLAAYAQNQSLKELLPASGNQLCET) lie on the Extracellular side of the membrane. N-linked (GlcNAc...) asparagine glycosylation is present at asparagine 89. Cysteine 104 and cysteine 182 are disulfide-bonded. A helical membrane pass occupies residues 107-127 (FAFLMSFFGLASTLQLLAMAV). At 128 to 149 (ECWLSLGHPFFYQRHVTLRRGV) the chain is on the cytoplasmic side. Residues 150–170 (LVAPVVAAFCLAFCALPFAGF) traverse the membrane as a helical segment. The Extracellular portion of the chain corresponds to 171–194 (GKFVQYCPGTWCFIQMIHKERSFS). The helical transmembrane segment at 195–215 (VIGFSVLYSSLMALLVLATVV) threads the bilayer. Residues 216–261 (CNLGAMYNLYDMHRRQRHYPHRCSRDRAQSGSDYRHGSLHPLEELD) lie on the Cytoplasmic side of the membrane. Residues 262–282 (HFVLLALMTVLFTMCSLPLIY) traverse the membrane as a helical segment. The Extracellular segment spans residues 283-306 (RAYYGAFKLENKAEGDSEDLQALR). Residues 307-327 (FLSVISIVDPWIFIIFRTSVF) form a helical membrane-spanning segment. The Cytoplasmic segment spans residues 328–357 (RMLFHKVFTRPLIYRNWSSHSQQSNVESTL).

This sequence belongs to the G-protein coupled receptor 1 family. Most abundantly expressed in the ileum, followed by lung, stomach and uterus.

Its subcellular location is the cell membrane. Functionally, receptor for prostaglandin D2 (PGD2). The activity of this receptor is mainly mediated by G(s) proteins that stimulate adenylate cyclase, resulting in an elevation of intracellular cAMP. A mobilization of calcium is also observed, but without formation of inositol 1,4,5-trisphosphate. Involved in PLA2G3-dependent maturation of mast cells. PLA2G3 is secreted by immature mast cells and acts on nearby fibroblasts upstream to PTDGS to synthesize PGD2, which in turn promotes mast cell maturation and degranulation via PTGDR. In Mus musculus (Mouse), this protein is Prostaglandin D2 receptor (Ptgdr).